We begin with the raw amino-acid sequence, 871 residues long: Ubiquitin carboxyl-terminal hydrolase 8 (871 aa).

The region spanning 4 to 99 (TSPDESPDST…GETGEASVSG (96 aa)) is the DUSP domain. The 591-residue stretch at 279–869 (TGLQNLGNTC…AAYVLFYKRL (591 aa)) folds into the USP domain. Cys-288 (nucleophile) is an active-site residue. The segment at 615–650 (ENLENPTEEEATDKTDTDGTTSVEDTNSTDVKETTE) is disordered. His-828 functions as the Proton acceptor in the catalytic mechanism.

The protein belongs to the peptidase C19 family.

It catalyses the reaction Thiol-dependent hydrolysis of ester, thioester, amide, peptide and isopeptide bonds formed by the C-terminal Gly of ubiquitin (a 76-residue protein attached to proteins as an intracellular targeting signal).. Recognizes and hydrolyzes the peptide bond at the C-terminal Gly of ubiquitin. Involved in the processing of poly-ubiquitin precursors as well as that of ubiquitinated proteins. This is Ubiquitin carboxyl-terminal hydrolase 8 (UBP8) from Arabidopsis thaliana (Mouse-ear cress).